The sequence spans 901 residues: Valine--tRNA ligase (901 aa).

The disordered stretch occupies residues 1 to 37; the sequence is MLPGCYTHRLNMSDTQDPPQDESTTDESADALDGEYD. The segment covering 19–35 has biased composition (acidic residues); that stretch reads PQDESTTDESADALDGE. Residues 72–82 carry the 'HIGH' region motif; that stretch reads PTVSGNLHMGH. The 'KMSKS' region signature appears at 572–576; the sequence is AMSKS. Residue Lys-575 coordinates ATP.

The protein belongs to the class-I aminoacyl-tRNA synthetase family. ValS type 2 subfamily.

It localises to the cytoplasm. It catalyses the reaction tRNA(Val) + L-valine + ATP = L-valyl-tRNA(Val) + AMP + diphosphate. In terms of biological role, catalyzes the attachment of valine to tRNA(Val). As ValRS can inadvertently accommodate and process structurally similar amino acids such as threonine, to avoid such errors, it has a 'posttransfer' editing activity that hydrolyzes mischarged Thr-tRNA(Val) in a tRNA-dependent manner. This is Valine--tRNA ligase from Haloarcula marismortui (strain ATCC 43049 / DSM 3752 / JCM 8966 / VKM B-1809) (Halobacterium marismortui).